The primary structure comprises 601 residues: Elongation factor 4 (601 aa).

The 183-residue stretch at 7–189 (RNIRNFSIIA…AIVHRIPPPA (183 aa)) folds into the tr-type G domain. GTP contacts are provided by residues 19–24 (DHGKST) and 136–139 (NKID).

It belongs to the TRAFAC class translation factor GTPase superfamily. Classic translation factor GTPase family. LepA subfamily.

The protein resides in the cell inner membrane. It carries out the reaction GTP + H2O = GDP + phosphate + H(+). In terms of biological role, required for accurate and efficient protein synthesis under certain stress conditions. May act as a fidelity factor of the translation reaction, by catalyzing a one-codon backward translocation of tRNAs on improperly translocated ribosomes. Back-translocation proceeds from a post-translocation (POST) complex to a pre-translocation (PRE) complex, thus giving elongation factor G a second chance to translocate the tRNAs correctly. Binds to ribosomes in a GTP-dependent manner. The protein is Elongation factor 4 of Xanthomonas oryzae pv. oryzae (strain MAFF 311018).